The following is a 121-amino-acid chain: Ribonuclease P protein component (121 aa).

Belongs to the RnpA family. As to quaternary structure, consists of a catalytic RNA component (M1 or rnpB) and a protein subunit.

It catalyses the reaction Endonucleolytic cleavage of RNA, removing 5'-extranucleotides from tRNA precursor.. Functionally, RNaseP catalyzes the removal of the 5'-leader sequence from pre-tRNA to produce the mature 5'-terminus. It can also cleave other RNA substrates such as 4.5S RNA. The protein component plays an auxiliary but essential role in vivo by binding to the 5'-leader sequence and broadening the substrate specificity of the ribozyme. This chain is Ribonuclease P protein component, found in Geobacillus thermodenitrificans (strain NG80-2).